Reading from the N-terminus, the 28-residue chain is M-ectatotoxin-Eb2c (28 aa).

Expressed by the venom gland.

The protein resides in the secreted. Antimicrobial peptide active against Gram-negative bacterium E.coli MH1 (MIC=3.5 uM) and P.aeruginosa PAO1 (MIC=10 uM) and against Gram-positive bacterium A.globiformis VKM Ac-1112 (MIC=1.25 uM). This chain is M-ectatotoxin-Eb2c, found in Ectatomma brunneum (Ant).